A 319-amino-acid chain; its full sequence is Putrescine hydroxycinnamoyltransferase 2 (319 aa).

Residues His160 and Asp301 each act as proton acceptor in the active site.

This sequence belongs to the plant acyltransferase family.

In terms of biological role, hydroxycinnamoyl transferase that catalyzes the transfer of an acyl from p-coumaryol-CoA to putrescine, to produce coumaroyl putrescine. The chain is Putrescine hydroxycinnamoyltransferase 2 from Oryza sativa subsp. japonica (Rice).